A 167-amino-acid chain; its full sequence is Small ribosomal subunit protein uS5 (167 aa).

The 64-residue stretch at 12–75 (LQEKLIAVNR…EKARRNMVTV (64 aa)) folds into the S5 DRBM domain.

This sequence belongs to the universal ribosomal protein uS5 family. As to quaternary structure, part of the 30S ribosomal subunit. Contacts proteins S4 and S8.

Functionally, with S4 and S12 plays an important role in translational accuracy. In terms of biological role, located at the back of the 30S subunit body where it stabilizes the conformation of the head with respect to the body. In Shewanella denitrificans (strain OS217 / ATCC BAA-1090 / DSM 15013), this protein is Small ribosomal subunit protein uS5.